The chain runs to 951 residues: MEKTYNPQDIEQPLYEHWEKQGYFKPNGDESQESFCIMIPPPNVTGSLHMGHAFQQTIMDTMIRYQRMQGKNTLWQVGTDHAGIATQMVVERKIAAEEGKTRHDYGREAFIDKIWEWKAESGGTITRQMRRLGNSVDWERERFTMDEGLSNAVKEVFVRLYKEDLIYRGKRLVNWDPKLRTAISDLEVENRESKGSMWHIRYPLADGAKTADGKDYLVVATTRPETLLGDTGVAVNPEDPRYKDLIGKYVILPLVNRRIPIVGDEHADMEKGTGCVKITPAHDFNDYEVGKRHALPMINILTFDGDIRESAQVFDTKGNESDVYSSEIPAEFQKLERFAARKAVVAAVDALGLLEEIKPHDLTVPYGDRGGVVIEPMLTDQWYVRADVLAKPAVEAVENGDIQFVPKQYENMYFSWMRDIQDWCISRQLWWGHRIPAWYDEAGNVYVGRNEEEVRKENNLGADVALRQDEDVLDTWFSSALWTFSTLGWPENTDALRQFHPTSVMVSGFDIIFFWIARMIMMTMHFIKDENGKPQVPFHTVYMTGLIRDDEGQKMSKSKGNVIDPLDMVDGISLPELLEKRTGNMMQPQLADKIRKRTEKQFPNGIEPHGTDALRFTLAALASTGRDINWDMKRLEGYRNFCNKLWNASRFVLMNTEGQDCGFNGGEMTLSLADRWILAEFNQTIKAYREALDSFRFDIAAGILYEFTWNQFCDWYLELTKPVMNGGTEAELRGTRHTLVTVLEGLLRLAHPIIPFITETIWQRVKVLCGITADTIMLQPFPQYDASQVDEAALADTEWLKQAIVAVRNIRAEMNIAPGKPLELLLRGCSADAERRVNENRGFLQTLARLESITVLPADDKGPVSVTKIIDGAELLIPMAGLINKEDELARLAKEVAKIEGEISRIENKLANEGFVARAPEAVIAKEREKLEGYAEAKAKLIEQQAVIAAL.

Residues 42–52 (PNVTGSLHMGH) carry the 'HIGH' region motif. The short motif at 554-558 (KMSKS) is the 'KMSKS' region element. K557 is a binding site for ATP. Residues 880-944 (AGLINKEDEL…AEAKAKLIEQ (65 aa)) adopt a coiled-coil conformation.

The protein belongs to the class-I aminoacyl-tRNA synthetase family. ValS type 1 subfamily. As to quaternary structure, monomer.

It localises to the cytoplasm. The catalysed reaction is tRNA(Val) + L-valine + ATP = L-valyl-tRNA(Val) + AMP + diphosphate. In terms of biological role, catalyzes the attachment of valine to tRNA(Val). As ValRS can inadvertently accommodate and process structurally similar amino acids such as threonine, to avoid such errors, it has a 'posttransfer' editing activity that hydrolyzes mischarged Thr-tRNA(Val) in a tRNA-dependent manner. This Shigella boydii serotype 4 (strain Sb227) protein is Valine--tRNA ligase.